Consider the following 239-residue polypeptide: Ribosomal RNA small subunit methyltransferase G (239 aa).

S-adenosyl-L-methionine contacts are provided by residues G78, F83, 129–130, and R148; that span reads AE.

Belongs to the methyltransferase superfamily. RNA methyltransferase RsmG family.

The protein localises to the cytoplasm. Its function is as follows. Specifically methylates the N7 position of a guanine in 16S rRNA. This chain is Ribosomal RNA small subunit methyltransferase G, found in Clostridium botulinum (strain Okra / Type B1).